Here is a 93-residue protein sequence, read N- to C-terminus: Putative pterin-4-alpha-carbinolamine dehydratase (93 aa).

This sequence belongs to the pterin-4-alpha-carbinolamine dehydratase family.

The catalysed reaction is (4aS,6R)-4a-hydroxy-L-erythro-5,6,7,8-tetrahydrobiopterin = (6R)-L-erythro-6,7-dihydrobiopterin + H2O. The sequence is that of Putative pterin-4-alpha-carbinolamine dehydratase from Nostoc sp. (strain PCC 7120 / SAG 25.82 / UTEX 2576).